Reading from the N-terminus, the 277-residue chain is Putative phosphoenolpyruvate synthase regulatory protein (277 aa).

Residue 156–163 (GVSRAGKT) participates in ADP binding.

Belongs to the pyruvate, phosphate/water dikinase regulatory protein family. PSRP subfamily.

It carries out the reaction [pyruvate, water dikinase] + ADP = [pyruvate, water dikinase]-phosphate + AMP + H(+). The enzyme catalyses [pyruvate, water dikinase]-phosphate + phosphate + H(+) = [pyruvate, water dikinase] + diphosphate. Functionally, bifunctional serine/threonine kinase and phosphorylase involved in the regulation of the phosphoenolpyruvate synthase (PEPS) by catalyzing its phosphorylation/dephosphorylation. This is Putative phosphoenolpyruvate synthase regulatory protein from Deinococcus radiodurans (strain ATCC 13939 / DSM 20539 / JCM 16871 / CCUG 27074 / LMG 4051 / NBRC 15346 / NCIMB 9279 / VKM B-1422 / R1).